The sequence spans 148 residues: Ribonuclease P protein component (148 aa).

A disordered region spans residues 119 to 148; the sequence is PLPAAPGTMPPARAPRPSSLSPTEPDPRSD.

The protein belongs to the RnpA family. As to quaternary structure, consists of a catalytic RNA component (M1 or rnpB) and a protein subunit.

The catalysed reaction is Endonucleolytic cleavage of RNA, removing 5'-extranucleotides from tRNA precursor.. In terms of biological role, RNaseP catalyzes the removal of the 5'-leader sequence from pre-tRNA to produce the mature 5'-terminus. It can also cleave other RNA substrates such as 4.5S RNA. The protein component plays an auxiliary but essential role in vivo by binding to the 5'-leader sequence and broadening the substrate specificity of the ribozyme. The polypeptide is Ribonuclease P protein component (Xanthomonas campestris pv. campestris (strain 8004)).